The chain runs to 47 residues: Bacteriocin curvaticin DN317 (47 aa).

Belongs to the bacteriocin class IIA/YGNGV family.

The protein localises to the secreted. Its function is as follows. Has bactericidal activity against various Gram-negative Campylobacter, and the Gram-positive L.monocytogenes and B.subtilis. In vitro, inhibits C.jejuni strain ATCC 33560 (MIC=27.3 ug/ml). The polypeptide is Bacteriocin curvaticin DN317 (Latilactobacillus curvatus (Lactobacillus curvatus)).